The chain runs to 825 residues: Probable phosphoketolase (825 aa).

Belongs to the XFP family. Thiamine diphosphate is required as a cofactor.

This chain is Probable phosphoketolase, found in Schizosaccharomyces pombe (strain 972 / ATCC 24843) (Fission yeast).